A 319-amino-acid polypeptide reads, in one-letter code: tRNA uridine(34) hydroxylase (319 aa).

One can recognise a Rhodanese domain in the interval 127-221 (KQEDTVIIDA…YGKDPEVQGE (95 aa)). The Cysteine persulfide intermediate role is filled by Cys-181.

The protein belongs to the TrhO family.

It catalyses the reaction uridine(34) in tRNA + AH2 + O2 = 5-hydroxyuridine(34) in tRNA + A + H2O. Catalyzes oxygen-dependent 5-hydroxyuridine (ho5U) modification at position 34 in tRNAs. The polypeptide is tRNA uridine(34) hydroxylase (Bacillus cereus (strain ATCC 10987 / NRS 248)).